The chain runs to 275 residues: 4-hydroxy-3-methylbut-2-enyl diphosphate reductase (275 aa).

C12 lines the [4Fe-4S] cluster pocket. Residues H36 and H70 each contribute to the (2E)-4-hydroxy-3-methylbut-2-enyl diphosphate site. The dimethylallyl diphosphate site is built by H36 and H70. The isopentenyl diphosphate site is built by H36 and H70. C92 is a binding site for [4Fe-4S] cluster. Residue H120 participates in (2E)-4-hydroxy-3-methylbut-2-enyl diphosphate binding. H120 is a dimethylallyl diphosphate binding site. H120 serves as a coordination point for isopentenyl diphosphate. The active-site Proton donor is E122. (2E)-4-hydroxy-3-methylbut-2-enyl diphosphate is bound at residue T158. Position 186 (C186) interacts with [4Fe-4S] cluster. Residues S214, S215, N216, and S258 each contribute to the (2E)-4-hydroxy-3-methylbut-2-enyl diphosphate site. 4 residues coordinate dimethylallyl diphosphate: S214, S215, N216, and S258. Positions 214, 215, 216, and 258 each coordinate isopentenyl diphosphate.

This sequence belongs to the IspH family. Requires [4Fe-4S] cluster as cofactor.

The catalysed reaction is isopentenyl diphosphate + 2 oxidized [2Fe-2S]-[ferredoxin] + H2O = (2E)-4-hydroxy-3-methylbut-2-enyl diphosphate + 2 reduced [2Fe-2S]-[ferredoxin] + 2 H(+). It carries out the reaction dimethylallyl diphosphate + 2 oxidized [2Fe-2S]-[ferredoxin] + H2O = (2E)-4-hydroxy-3-methylbut-2-enyl diphosphate + 2 reduced [2Fe-2S]-[ferredoxin] + 2 H(+). It functions in the pathway isoprenoid biosynthesis; dimethylallyl diphosphate biosynthesis; dimethylallyl diphosphate from (2E)-4-hydroxy-3-methylbutenyl diphosphate: step 1/1. Its pathway is isoprenoid biosynthesis; isopentenyl diphosphate biosynthesis via DXP pathway; isopentenyl diphosphate from 1-deoxy-D-xylulose 5-phosphate: step 6/6. In terms of biological role, catalyzes the conversion of 1-hydroxy-2-methyl-2-(E)-butenyl 4-diphosphate (HMBPP) into a mixture of isopentenyl diphosphate (IPP) and dimethylallyl diphosphate (DMAPP). Acts in the terminal step of the DOXP/MEP pathway for isoprenoid precursor biosynthesis. This is 4-hydroxy-3-methylbut-2-enyl diphosphate reductase from Campylobacter hominis (strain ATCC BAA-381 / DSM 21671 / CCUG 45161 / LMG 19568 / NCTC 13146 / CH001A).